A 588-amino-acid polypeptide reads, in one-letter code: Hyaluronan synthase 1 (588 aa).

Residues 1–28 are Cytoplasmic-facing; sequence MKEKAAETMEIPEGIPKDLEPKHPTLWR. The chain crosses the membrane as a helical span at residues 29-49; it reads IIYYSFGVVLLATITAAYVAE. Topologically, residues 50 to 61 are extracellular; that stretch reads FQVLKHEAILFS. The helical transmembrane segment at 62–82 threads the bilayer; the sequence is LGLYGLAMLLHLMMQSLFAFL. Residues 83-411 lie on the Cytoplasmic side of the membrane; the sequence is EIRRVNKSEL…IWMTYESVVS (329 aa). The chain crosses the membrane as a helical span at residues 412–432; that stretch reads FIFPFFITATVIRLIYAGTIW. Position 433 (asparagine 433) is a topological domain, extracellular. Residues 434–454 form a helical membrane-spanning segment; it reads VVWLLLCIQIMSLFKSIYACW. Residues 455-456 lie on the Cytoplasmic side of the membrane; the sequence is LR. Residues 457-477 form a helical membrane-spanning segment; that stretch reads GNFIMLLMSLYSMLYMTGLLP. The Extracellular segment spans residues 478-505; that stretch reads SKYFALLTLNKTGWGTSGRKKIVGNYMP. The chain crosses the membrane as a helical span at residues 506–526; it reads ILPLSIWAAVLCGGVGYSIYM. Over 527–543 the chain is Cytoplasmic; it reads DCQNDWSTPEKQKEMYH. The chain crosses the membrane as a helical span at residues 544–564; the sequence is LLYGCVGYVMYWVIMAVMYWV. Topologically, residues 565 to 588 are extracellular; sequence WVKRCCRKRSQTVTLVHDIPDMCV.

This sequence belongs to the NodC/HAS family. Mg(2+) is required as a cofactor. Expression moves as a gradient through the embryo. The mRNA is first expressed in the animal region of the blastula, and by early gastrula is found everywhere except in the outer layer of the dorsal blastopore lip. By mid-gastrula, protein is present in the inner ectodermal layer and the endoderm, then disappears from dorsal ectoderm as the neural plate is induced and later decays in a dorsoventral direction. Last expressed in ventral regions of the gut at the tailbud stage (at protein level).

The protein resides in the membrane. The enzyme catalyses [hyaluronan](n) + UDP-N-acetyl-alpha-D-glucosamine = N-acetyl-beta-D-glucosaminyl-(1-&gt;4)-[hyaluronan](n) + UDP + H(+). It carries out the reaction N-acetyl-beta-D-glucosaminyl-(1-&gt;4)-[hyaluronan](n) + UDP-alpha-D-glucuronate = [hyaluronan](n+1) + UDP + H(+). It participates in glycan biosynthesis; hyaluronan biosynthesis. Functionally, catalyzes the addition of GlcNAc or GlcUA monosaccharides to the nascent hyaluronan polymer. Therefore, it is essential to hyaluronan synthesis a major component of most extracellular matrices that has a structural role in tissues architectures and regulates cell adhesion, migration and differentiation. Also able to catalyze the synthesis of chito-oligosaccharide depending on the substrate. The sequence is that of Hyaluronan synthase 1 (has1) from Xenopus laevis (African clawed frog).